A 166-amino-acid chain; its full sequence is Endoribonuclease YbeY (166 aa).

The Zn(2+) site is built by H132, H136, and H142.

It belongs to the endoribonuclease YbeY family. Zn(2+) is required as a cofactor.

The protein resides in the cytoplasm. Its function is as follows. Single strand-specific metallo-endoribonuclease involved in late-stage 70S ribosome quality control and in maturation of the 3' terminus of the 16S rRNA. The sequence is that of Endoribonuclease YbeY from Clostridium botulinum (strain Kyoto / Type A2).